A 298-amino-acid polypeptide reads, in one-letter code: Acetylglutamate kinase (298 aa).

Substrate-binding positions include 69 to 70, Arg91, and Asn196; that span reads GG.

The protein belongs to the acetylglutamate kinase family. ArgB subfamily.

Its subcellular location is the cytoplasm. It carries out the reaction N-acetyl-L-glutamate + ATP = N-acetyl-L-glutamyl 5-phosphate + ADP. It functions in the pathway amino-acid biosynthesis; L-arginine biosynthesis; N(2)-acetyl-L-ornithine from L-glutamate: step 2/4. Its function is as follows. Catalyzes the ATP-dependent phosphorylation of N-acetyl-L-glutamate. This is Acetylglutamate kinase from Rhodopseudomonas palustris (strain BisB5).